The chain runs to 1274 residues: Mediator of RNA polymerase II transcription subunit 14 (1274 aa).

3 disordered regions span residues 1 to 40 (MENGHMNGVRTHHDRNSWTNGVNGGVAKREGSPDKGKAHA), 1056 to 1142 (LVGT…LHTQ), and 1155 to 1274 (AQRQ…VVID). Residues 27-37 (AKREGSPDKGK) are compositionally biased toward basic and acidic residues. Polar residues predominate over residues 1075–1085 (QDLQQGPQKTP). Positions 1090-1104 (AAQAAQAAQAAQAAQ) are enriched in low complexity. Residues 1108–1119 (PQRPKQQPPTPS) show a composition bias toward pro residues. 3 stretches are compositionally biased toward low complexity: residues 1120 to 1142 (QPQQQHRNVNQPQAQAQPQLHTQ), 1155 to 1172 (AQRQAQARANNSSNNNNT), and 1183 to 1252 (PQQR…PQGQ). Gly residues predominate over residues 1253–1265 (PGHGGGANGGMGG).

Belongs to the Mediator complex subunit 14 family. In terms of assembly, component of the Mediator complex.

Its subcellular location is the nucleus. Its function is as follows. Component of the Mediator complex, a coactivator involved in the regulated transcription of nearly all RNA polymerase II-dependent genes. Mediator functions as a bridge to convey information from gene-specific regulatory proteins to the basal RNA polymerase II transcription machinery. Mediator is recruited to promoters by direct interactions with regulatory proteins and serves as a scaffold for the assembly of a functional preinitiation complex with RNA polymerase II and the general transcription factors. The protein is Mediator of RNA polymerase II transcription subunit 14 (rgr1) of Neurospora crassa (strain ATCC 24698 / 74-OR23-1A / CBS 708.71 / DSM 1257 / FGSC 987).